A 342-amino-acid polypeptide reads, in one-letter code: Dihydroorotase (342 aa).

Residues His13 and His15 each contribute to the Zn(2+) site. Substrate contacts are provided by residues 15 to 17 (HLR) and Asn41. Residues Lys98, His135, and His173 each contribute to the Zn(2+) site. Lys98 bears the N6-carboxylysine mark. His135 contributes to the substrate binding site. Residue Leu218 participates in substrate binding. Asp246 is a binding site for Zn(2+). The active site involves Asp246. 2 residues coordinate substrate: His250 and Ala262.

The protein belongs to the metallo-dependent hydrolases superfamily. DHOase family. Class II DHOase subfamily. Homodimer. It depends on Zn(2+) as a cofactor.

It catalyses the reaction (S)-dihydroorotate + H2O = N-carbamoyl-L-aspartate + H(+). It functions in the pathway pyrimidine metabolism; UMP biosynthesis via de novo pathway; (S)-dihydroorotate from bicarbonate: step 3/3. Catalyzes the reversible cyclization of carbamoyl aspartate to dihydroorotate. This is Dihydroorotase from Photobacterium profundum (strain SS9).